We begin with the raw amino-acid sequence, 717 residues long: Proline-rich receptor-like protein kinase PERK2 (717 aa).

Over residues 1-197 the composition is skewed to pro residues; the sequence is MSSAPPPGGT…GSLSPPPPAS (197 aa). The interval 1 to 221 is disordered; sequence MSSAPPPGGT…GSSPPAQSSK (221 aa). The Extracellular portion of the chain corresponds to 1 to 228; the sequence is MSSAPPPGGT…SSKELSKGAM (228 aa). The span at 198-220 shows a compositional bias: low complexity; sequence PSGGRSPSTPSTTPGSSPPAQSS. Residues 229–249 traverse the membrane as a helical segment; the sequence is VGIAIGGGFVLLVALALIFFL. Residues 250–717 lie on the Cytoplasmic side of the membrane; the sequence is CKKKRRRDNE…NIKRPGQGYG (468 aa). The segment at 258-323 is disordered; the sequence is NEAPPAPIDG…YDSNYSDQSV (66 aa). The segment covering 289–303 has biased composition (pro residues); it reads VPPPKSPSSAPPRPP. Low complexity predominate over residues 307-322; sequence SSGSSGDYDSNYSDQS. In terms of domain architecture, Protein kinase spans 354-631; the sequence is FSEANLLGQG…QVARVLEGNI (278 aa). Residues 360-368 and K382 each bind ATP; that span reads LGQGGFGYV. The active-site Proton acceptor is the D478. Polar residues-rich tracts occupy residues 632–644 and 692–705; these read SPSD…TPGH and SWSS…QGKA. Disordered stretches follow at residues 632-665 and 690-717; these read SPSD…DNEG and YPSW…QGYG.

It belongs to the protein kinase superfamily. Ser/Thr protein kinase family. Mostly expressed in inflorescence bolt, flower buds and siliques, and, to a lower extent, in roots, seedlings and leaves.

It localises to the cell membrane. It carries out the reaction L-seryl-[protein] + ATP = O-phospho-L-seryl-[protein] + ADP + H(+). The catalysed reaction is L-threonyl-[protein] + ATP = O-phospho-L-threonyl-[protein] + ADP + H(+). In Arabidopsis thaliana (Mouse-ear cress), this protein is Proline-rich receptor-like protein kinase PERK2 (PERK2).